The chain runs to 570 residues: Urease subunit alpha (570 aa).

One can recognise a Urease domain in the interval 131–570 (GGFDAHIHFI…LPMAQRYFLF (440 aa)). Residues His136, His138, and Lys219 each coordinate Ni(2+). Position 219 is an N6-carboxylysine (Lys219). His221 contacts substrate. Ni(2+) contacts are provided by His248 and His274. His322 (proton donor) is an active-site residue. Asp362 provides a ligand contact to Ni(2+).

This sequence belongs to the metallo-dependent hydrolases superfamily. Urease alpha subunit family. In terms of assembly, heterotrimer of UreA (gamma), UreB (beta) and UreC (alpha) subunits. Three heterotrimers associate to form the active enzyme. It depends on Ni cation as a cofactor. In terms of processing, carboxylation allows a single lysine to coordinate two nickel ions.

It is found in the cytoplasm. It catalyses the reaction urea + 2 H2O + H(+) = hydrogencarbonate + 2 NH4(+). It functions in the pathway nitrogen metabolism; urea degradation; CO(2) and NH(3) from urea (urease route): step 1/1. The sequence is that of Urease subunit alpha from Chelativorans sp. (strain BNC1).